The chain runs to 132 residues: Female-specific protein 800 (132 aa).

Its function is as follows. FS800 is likely to have some function in the production or maintenance of the schistosome egg. It may have a function unrelated to eggshell formation. The chain is Female-specific protein 800 from Schistosoma mansoni (Blood fluke).